Reading from the N-terminus, the 362-residue chain is DNA replication and repair protein RecF (362 aa).

30–37 is an ATP binding site; the sequence is GLNAQGKS.

The protein belongs to the RecF family.

It is found in the cytoplasm. In terms of biological role, the RecF protein is involved in DNA metabolism; it is required for DNA replication and normal SOS inducibility. RecF binds preferentially to single-stranded, linear DNA. It also seems to bind ATP. This is DNA replication and repair protein RecF from Thermoanaerobacter sp. (strain X514).